Reading from the N-terminus, the 450-residue chain is DNA primase DnaG (450 aa).

Positions 199–273 (DSIIVVEGRA…DVDYVARAPE (75 aa)) constitute a Toprim domain. Mg(2+) contacts are provided by Glu-205, Asp-247, and Asp-249. The segment covering 320–348 (APSKEVKPAPKHEPKPQPVEQKPREEKII) has biased composition (basic and acidic residues). The disordered stretch occupies residues 320–350 (APSKEVKPAPKHEPKPQPVEQKPREEKIIRP).

It belongs to the archaeal DnaG primase family. In terms of assembly, forms a ternary complex with MCM helicase and DNA. Component of the archaeal exosome complex. Mg(2+) serves as cofactor.

It carries out the reaction ssDNA + n NTP = ssDNA/pppN(pN)n-1 hybrid + (n-1) diphosphate.. RNA polymerase that catalyzes the synthesis of short RNA molecules used as primers for DNA polymerase during DNA replication. Also part of the exosome, which is a complex involved in RNA degradation. Acts as a poly(A)-binding protein that enhances the interaction between heteromeric, adenine-rich transcripts and the exosome. The chain is DNA primase DnaG from Thermococcus gammatolerans (strain DSM 15229 / JCM 11827 / EJ3).